Consider the following 301-residue polypeptide: MRAKITSVIVNNFYVYIYDLKIETKAIPKGIFKHDSHELKPMVGDDIEVELVDGVYLIVKIYDRYNQLIRPKVANVDIVLVVASIVQPDLNTLTLNKYLAFYEARNVKNVAIGLSKYDLASDSLKQKVDQLILDYQRNNYKVFVLTNEHDISLLKKFIKKHTLCLAGNSGVGKSTLINKLDPSIKQRTQEISQFLNRGKHTTTSTKLISFANGFLVDTPGFGNLEVNLTKNEMANAFSDFANYARFCKFSNCLHIDEPHCAIKKAVNDDQIVNWRYDDYLKIMKKLPNDVLEIKTRNQNKK.

The 160-residue stretch at 65-224 (YNQLIRPKVA…LVDTPGFGNL (160 aa)) folds into the CP-type G domain. GTP contacts are provided by residues 115-118 (SKYD) and 167-175 (GNSGVGKST). Residues cysteine 247, cysteine 252, histidine 254, and cysteine 260 each coordinate Zn(2+).

This sequence belongs to the TRAFAC class YlqF/YawG GTPase family. RsgA subfamily. As to quaternary structure, monomer. Associates with 30S ribosomal subunit, binds 16S rRNA. Zn(2+) is required as a cofactor.

The protein resides in the cytoplasm. One of several proteins that assist in the late maturation steps of the functional core of the 30S ribosomal subunit. Helps release RbfA from mature subunits. May play a role in the assembly of ribosomal proteins into the subunit. Circularly permuted GTPase that catalyzes slow GTP hydrolysis, GTPase activity is stimulated by the 30S ribosomal subunit. The polypeptide is Small ribosomal subunit biogenesis GTPase RsgA (Ureaplasma urealyticum serovar 10 (strain ATCC 33699 / Western)).